The sequence spans 409 residues: MRKNRGFSFSSKAVMMCCLAFLLIPASFAFAAPNKPFPQHTTYTSGSIKPNHVTQSAMDSSVKAKWDSWKSAYLKTAGTGKYYVKYQSNGDTVSEAHGYGMLATVIMAGYDGNAQTYFDGLYQYYKAHPSANNSKLMAWKQNSSFQNIEGADSATDGDMDIAYSLLLADKQWGSSGSINYLQAGKDIINAIMQSDVNQSQWTLRLGDWATDNTFKNATRPSDFMLNHLKAFQAATGDARWANVIDKTYTIINSLYSGYSSSTGLLPDFVVLSGSTYKPASADFLEGANDGSYDYNSCRTPWRIATDYLMTGDSRALNQLNQMNSWISAKVSGNPSNVKDGYKLNGTVTGSGGSGAFYAPFGVSAMTSSVNQNWLNSVWTKTAGSSNEGYYEDSIKLFSMIVMSGNWWTY.

The first 31 residues, 1-31, serve as a signal peptide directing secretion; it reads MRKNRGFSFSSKAVMMCCLAFLLIPASFAFA. Glutamate 95 acts as the Proton donor in catalysis. The Nucleophile role is filled by aspartate 156.

The protein belongs to the glycosyl hydrolase 8 (cellulase D) family.

The enzyme catalyses Hydrolysis of (1-&gt;4)-beta-D-glucosidic linkages in beta-D-glucans containing (1-&gt;3)- and (1-&gt;4)-bonds.. The sequence is that of Beta-glucanase (bgc) from Niallia circulans (Bacillus circulans).